The chain runs to 59 residues: UPF0434 protein Rsph17029_0141 (59 aa).

It belongs to the UPF0434 family.

The polypeptide is UPF0434 protein Rsph17029_0141 (Cereibacter sphaeroides (strain ATCC 17029 / ATH 2.4.9) (Rhodobacter sphaeroides)).